The following is a 241-amino-acid chain: ATP synthase subunit a (241 aa).

5 consecutive transmembrane segments (helical) span residues 23–43 (VSFT…AAFF), 83–103 (YFPY…LGML), 113–133 (IAVT…IGFA), 188–208 (VLAG…FAVV), and 209–229 (LGVT…FTIL).

It belongs to the ATPase A chain family. In terms of assembly, F-type ATPases have 2 components, CF(1) - the catalytic core - and CF(0) - the membrane proton channel. CF(1) has five subunits: alpha(3), beta(3), gamma(1), delta(1), epsilon(1). CF(0) has four main subunits: a, b, b' and c.

The protein resides in the cell inner membrane. In terms of biological role, key component of the proton channel; it plays a direct role in the translocation of protons across the membrane. The protein is ATP synthase subunit a of Rhodospirillum rubrum (strain ATCC 11170 / ATH 1.1.1 / DSM 467 / LMG 4362 / NCIMB 8255 / S1).